Consider the following 78-residue polypeptide: MSRVCELSGTRANNGMAVSHSHIRTKKLQQANLQKRRLWWEEGKKWLNIRVSTSTLKTIQKKGLDSYAKSQGIDLKKL.

This sequence belongs to the bacterial ribosomal protein bL28 family.

The polypeptide is Large ribosomal subunit protein bL28 (Prochlorococcus marinus (strain SARG / CCMP1375 / SS120)).